Reading from the N-terminus, the 292-residue chain is 4-hydroxy-tetrahydrodipicolinate synthase (292 aa).

Pyruvate is bound at residue Thr45. Tyr133 functions as the Proton donor/acceptor in the catalytic mechanism. Lys161 (schiff-base intermediate with substrate) is an active-site residue. Ile203 lines the pyruvate pocket.

It belongs to the DapA family. As to quaternary structure, homotetramer; dimer of dimers.

It is found in the cytoplasm. The enzyme catalyses L-aspartate 4-semialdehyde + pyruvate = (2S,4S)-4-hydroxy-2,3,4,5-tetrahydrodipicolinate + H2O + H(+). Its pathway is amino-acid biosynthesis; L-lysine biosynthesis via DAP pathway; (S)-tetrahydrodipicolinate from L-aspartate: step 3/4. Catalyzes the condensation of (S)-aspartate-beta-semialdehyde [(S)-ASA] and pyruvate to 4-hydroxy-tetrahydrodipicolinate (HTPA). This is 4-hydroxy-tetrahydrodipicolinate synthase from Nitrosococcus oceani (strain ATCC 19707 / BCRC 17464 / JCM 30415 / NCIMB 11848 / C-107).